The following is a 253-amino-acid chain: HVVVGTPGRVFDMLRRQSLRPDNIKMFVLDEADEMLSRGFKDQIYDIFQLLPPKIQVGIFSATMPPEALEITRKFMNKPVRILVKRDELTLEGIKQFYVNVDKEEWKLETLCDLYETLAITQSVIFVNTRRKVDWLTDKMRGRDHTVSATHGDMDQNTRDIIMREFRSGSSRVLITTDLLARGIDVQQVSLVINYDLPTQPENYLHRIGRSGRFGRKGVSINFVTKDDERMLFDIQKFYNVVIEELPANVADL.

The region spanning 1 to 82 (HVVVGTPGRV…RKFMNKPVRI (82 aa)) is the Helicase ATP-binding domain. Positions 30-33 (DEAD) match the DEAD box motif. In terms of domain architecture, Helicase C-terminal spans 93-253 (GIKQFYVNVD…EELPANVADL (161 aa)).

The protein belongs to the DEAD box helicase family. eIF4A subfamily. EIF4F is a multi-subunit complex, the composition of which varies with external and internal environmental conditions. It is composed of at least EIF4A, EIF4E and EIF4G.

It carries out the reaction ATP + H2O = ADP + phosphate + H(+). ATP-dependent RNA helicase which is a subunit of the eIF4F complex involved in cap recognition and is required for mRNA binding to ribosome. In the current model of translation initiation, eIF4A unwinds RNA secondary structures in the 5'-UTR of mRNAs which is necessary to allow efficient binding of the small ribosomal subunit, and subsequent scanning for the initiator codon. The chain is Eukaryotic initiation factor 4A-6 from Nicotiana tabacum (Common tobacco).